A 155-amino-acid chain; its full sequence is MPHSNISRAPRQNLTERVLQAKTAKNLTWAGLAEGTGLSVVYVTAALLGQHPLPEAVAEVVAERLGLDRDAVAELQTIPLRGNVEDVSSDPTIYRFHEMVQVYGTTLKALVHEQFGDGIISAINFKLDIKKVEDPEGGERAVITLDGKFLPYKPF.

Residues arginine 95, glutamate 98, and serine 121 contribute to the active site.

The protein belongs to the cyanase family.

It catalyses the reaction cyanate + hydrogencarbonate + 3 H(+) = NH4(+) + 2 CO2. Functionally, catalyzes the reaction of cyanate with bicarbonate to produce ammonia and carbon dioxide. In Pseudomonas savastanoi pv. phaseolicola (strain 1448A / Race 6) (Pseudomonas syringae pv. phaseolicola (strain 1448A / Race 6)), this protein is Cyanate hydratase.